Consider the following 280-residue polypeptide: MSSSIKKLKKDTKDTDKTPSKKIYQETHNSEDSEDSEDSDNENNTITMFNSTQNFYKYINLNKIKSSNYHSEISDNSIRPYFENLEKHLVEYINKATYVIGCIAWLTNDNIISSLQQKKGIKIIVNKEEFLNPNMEIAKKNYYCTLRSKYQSLPNMFTSKCYCCSDSITSCKKFNKIFGSISMSENNNSSVLTCGIVNSLPKMHHKFLIFFDENLNPVGVWTGSYNLSKTSNFSLENALYITSQIVIAEYIKEFLAVYKHSENFNWKSGTLYGKLKNPVY.

Residues 1–10 (MSSSIKKLKK) are compositionally biased toward basic residues. The segment at 1-45 (MSSSIKKLKKDTKDTDKTPSKKIYQETHNSEDSEDSEDSDNENNT) is disordered. Over residues 11 to 31 (DTKDTDKTPSKKIYQETHNSE) the composition is skewed to basic and acidic residues. A compositionally biased stretch (acidic residues) spans 32–41 (DSEDSEDSDN).

This is an uncharacterized protein from Acanthamoeba polyphaga mimivirus (APMV).